We begin with the raw amino-acid sequence, 556 residues long: 2-succinyl-5-enolpyruvyl-6-hydroxy-3-cyclohexene-1-carboxylate synthase (556 aa).

The protein belongs to the TPP enzyme family. MenD subfamily. Homodimer. It depends on Mg(2+) as a cofactor. The cofactor is Mn(2+). Thiamine diphosphate is required as a cofactor.

It carries out the reaction isochorismate + 2-oxoglutarate + H(+) = 5-enolpyruvoyl-6-hydroxy-2-succinyl-cyclohex-3-ene-1-carboxylate + CO2. Its pathway is quinol/quinone metabolism; 1,4-dihydroxy-2-naphthoate biosynthesis; 1,4-dihydroxy-2-naphthoate from chorismate: step 2/7. The protein operates within quinol/quinone metabolism; menaquinone biosynthesis. Its function is as follows. Catalyzes the thiamine diphosphate-dependent decarboxylation of 2-oxoglutarate and the subsequent addition of the resulting succinic semialdehyde-thiamine pyrophosphate anion to isochorismate to yield 2-succinyl-5-enolpyruvyl-6-hydroxy-3-cyclohexene-1-carboxylate (SEPHCHC). The protein is 2-succinyl-5-enolpyruvyl-6-hydroxy-3-cyclohexene-1-carboxylate synthase of Escherichia coli (strain SMS-3-5 / SECEC).